A 349-amino-acid polypeptide reads, in one-letter code: Phosphate acyltransferase (349 aa).

The protein belongs to the PlsX family. Homodimer. Probably interacts with PlsY.

The protein localises to the cytoplasm. It catalyses the reaction a fatty acyl-[ACP] + phosphate = an acyl phosphate + holo-[ACP]. It functions in the pathway lipid metabolism; phospholipid metabolism. Catalyzes the reversible formation of acyl-phosphate (acyl-PO(4)) from acyl-[acyl-carrier-protein] (acyl-ACP). This enzyme utilizes acyl-ACP as fatty acyl donor, but not acyl-CoA. This is Phosphate acyltransferase from Colwellia psychrerythraea (strain 34H / ATCC BAA-681) (Vibrio psychroerythus).